Reading from the N-terminus, the 568-residue chain is O-fucosyltransferase 9 (568 aa).

Low complexity predominate over residues 1–19 (MHGLSRLGNGSSNGRINIP). The interval 1–33 (MHGLSRLGNGSSNGRINIPSPSPPSSPRIRHTR) is disordered. A helical; Signal-anchor for type II membrane protein membrane pass occupies residues 65–85 (LLLAPLLYIAGMLLFMGSFGF). N125, N151, N189, and N243 each carry an N-linked (GlcNAc...) asparagine glycan. 336 to 338 (HLR) lines the substrate pocket. N-linked (GlcNAc...) asparagine glycosylation is found at N408 and N409.

This sequence belongs to the glycosyltransferase GT106 family.

The protein resides in the membrane. Its pathway is glycan metabolism. The chain is O-fucosyltransferase 9 from Arabidopsis thaliana (Mouse-ear cress).